A 196-amino-acid polypeptide reads, in one-letter code: Serine/arginine-rich splicing factor RSZ22A (196 aa).

An RRM domain is found at 2-71 (SRVYVGNLDP…NGWRVEQSHN (70 aa)). A Phosphoserine modification is found at Ser48. The span at 58–70 (VDGKNGWRVEQSH) shows a compositional bias: basic and acidic residues. Residues 58 to 196 (VDGKNGWRVE…GLKDVRRSRS (139 aa)) are disordered. Residues 72 to 87 (RGGGGGRGGGRGGGDG) show a composition bias toward gly residues. Positions 88–100 (GRGRGGSDLKCYE) are enriched in basic and acidic residues. A CCHC-type zinc finger spans residues 96 to 113 (LKCYECGESGHFARECRS). A compositionally biased stretch (basic residues) spans 119-135 (GRRRSRSRSRSPPRYRK). 7 positions are modified to phosphoserine: Ser136, Ser144, Ser146, Ser151, Ser159, Ser170, and Ser196. The segment covering 139-149 (YGGRRSYSPRA) has biased composition (low complexity).

It belongs to the splicing factor SR family. RSZ subfamily. Component of the spliceosome. Post-translationally, extensively phosphorylated on serine residues in the RS domain.

Its subcellular location is the nucleus. Probably involved in intron recognition and spliceosome assembly. The polypeptide is Serine/arginine-rich splicing factor RSZ22A (RSZ22A) (Arabidopsis thaliana (Mouse-ear cress)).